Reading from the N-terminus, the 154-residue chain is Lipoprotein signal peptidase (154 aa).

2 helical membrane-spanning segments follow: residues 55–75 (GHMW…IYIM) and 84–104 (LFSI…IDRV). Catalysis depends on residues Asp111 and Asp129. A helical transmembrane segment spans residues 124–144 (IFNVADASLSVGVVLMLVYVF).

This sequence belongs to the peptidase A8 family.

The protein resides in the cell membrane. The enzyme catalyses Release of signal peptides from bacterial membrane prolipoproteins. Hydrolyzes -Xaa-Yaa-Zaa-|-(S,diacylglyceryl)Cys-, in which Xaa is hydrophobic (preferably Leu), and Yaa (Ala or Ser) and Zaa (Gly or Ala) have small, neutral side chains.. It functions in the pathway protein modification; lipoprotein biosynthesis (signal peptide cleavage). In terms of biological role, this protein specifically catalyzes the removal of signal peptides from prolipoproteins. This is Lipoprotein signal peptidase from Listeria welshimeri serovar 6b (strain ATCC 35897 / DSM 20650 / CCUG 15529 / CIP 8149 / NCTC 11857 / SLCC 5334 / V8).